We begin with the raw amino-acid sequence, 90 residues long: Protein RALF-like 29 (90 aa).

Positions 1-25 are cleaved as a signal peptide; that stretch reads MIKTKEVTFVTILIVLCVFISTIHA. Intrachain disulfides connect C41/C50 and C63/C69.

Belongs to the plant rapid alkalinization factor (RALF) family.

The protein localises to the secreted. Functionally, cell signaling peptide that may regulate plant stress, growth, and development. Mediates a rapid alkalinization of extracellular space by mediating a transient increase in the cytoplasmic Ca(2+) concentration leading to a calcium-dependent signaling events through a cell surface receptor and a concomitant activation of some intracellular mitogen-activated protein kinases. This chain is Protein RALF-like 29 (RALFL29), found in Arabidopsis thaliana (Mouse-ear cress).